The following is a 141-amino-acid chain: Small ribosomal subunit protein bS16 (141 aa).

Positions 84–141 (TRKARSNPEKSKPKAKAQERLEAARMAEEEAAAAAKAAAEAPAEEAPAAEAPAEEAQA) are disordered. Over residues 89-111 (SNPEKSKPKAKAQERLEAARMAE) the composition is skewed to basic and acidic residues. The span at 115 to 141 (AAAAKAAAEAPAEEAPAAEAPAEEAQA) shows a compositional bias: low complexity.

The protein belongs to the bacterial ribosomal protein bS16 family.

This Parvibaculum lavamentivorans (strain DS-1 / DSM 13023 / NCIMB 13966) protein is Small ribosomal subunit protein bS16.